The sequence spans 619 residues: Mitogen-activated protein kinase kinase kinase 2 (619 aa).

Residues 25 to 45 are disordered; sequence LSLQETRKAKSSSPKKQNDVR. S26 bears the Phosphoserine mark. The 80-residue stretch at 43 to 122 folds into the PB1 domain; it reads DVRVKFEHRG…KSLKILLVIN (80 aa). 3 positions are modified to phosphoserine: S153, S159, and S164. 3 disordered regions span residues 154 to 173, 201 to 248, and 289 to 355; these read IIGPTSRDRSSPPPGYIPDE, LDPL…QEFS, and RTQG…APTN. The span at 203 to 219 shows a compositional bias: low complexity; that stretch reads PLSLSSPENSGSGSCPS. Phosphoserine is present on residues S239, S297, S311, S331, S344, and S349. Positions 290–299 are enriched in polar residues; sequence TQGTSLRSPV. Residues 300-315 show a composition bias toward low complexity; the sequence is SFSPTDHSLSTSSGSS. Basic and acidic residues predominate over residues 322–332; sequence DDSRIRRRGSD. Residues 357–617 enclose the Protein kinase domain; it reads RLGKLLGQGA…DELLRHMFVH (261 aa). ATP-binding positions include 362 to 371 and K385; that span reads LGQGAFGRVY. The active-site Proton acceptor is D483.

This sequence belongs to the protein kinase superfamily. STE Ser/Thr protein kinase family. MAP kinase kinase kinase subfamily. Interacts with PKN2; the interaction activates PKN2 kinase activity in a MAP3K2-independent kinase activity. Self-associates. Binds both upstream activators and downstream substrates in multimolecular complexes. Interacts (via the kinase catalytic domain) with STK38. Interacts with XIAP/BIRC4. The cofactor is Mg(2+). In terms of processing, autophosphorylated. Ubiquitination by XIAP/BIRC4 does not lead to proteasomal degradation.

The protein localises to the cytoplasm. Its subcellular location is the nucleus. It carries out the reaction L-seryl-[protein] + ATP = O-phospho-L-seryl-[protein] + ADP + H(+). The enzyme catalyses L-threonyl-[protein] + ATP = O-phospho-L-threonyl-[protein] + ADP + H(+). Its activity is regulated as follows. Activated by phosphorylation on Thr-524. In terms of biological role, component of a protein kinase signal transduction cascade. Regulates the JNK and ERK5 pathways by phosphorylating and activating MAP2K5 and MAP2K7. Plays a role in caveolae kiss-and-run dynamics. This Homo sapiens (Human) protein is Mitogen-activated protein kinase kinase kinase 2 (MAP3K2).